A 243-amino-acid chain; its full sequence is Dirigent protein 16 (243 aa).

Residues methionine 1 to alanine 24 form the signal peptide.

Belongs to the plant dirigent protein family. Homodimer.

Its subcellular location is the secreted. The protein resides in the extracellular space. It is found in the apoplast. Its function is as follows. Dirigent proteins impart stereoselectivity on the phenoxy radical-coupling reaction, yielding optically active lignans from two molecules of coniferyl alcohol in the biosynthesis of lignans, flavonolignans, and alkaloids and thus plays a central role in plant secondary metabolism. This chain is Dirigent protein 16 (DIR16), found in Arabidopsis thaliana (Mouse-ear cress).